The primary structure comprises 303 residues: Albumin b-32 (303 aa).

Positions 112 to 137 (ATPTSSATTPGGSASAAGTRTSSATR) are enriched in low complexity. A disordered region spans residues 112–175 (ATPTSSATTP…GGGGADADAD (64 aa)). Over residues 146–156 (ARDDQGRQRPG) the composition is skewed to basic and acidic residues.

It belongs to the ribosome-inactivating protein family. Type 1 RIP subfamily. Monomer. Endosperm.

Its subcellular location is the cytoplasm. It carries out the reaction Endohydrolysis of the N-glycosidic bond at one specific adenosine on the 28S rRNA.. Its function is as follows. A possible regulatory factor for the synthesis of zeins, the major group of storage proteins. This chain is Albumin b-32 (O6), found in Zea mays (Maize).